Reading from the N-terminus, the 231-residue chain is ATP-dependent dethiobiotin synthetase BioD (231 aa).

13-18 (DVGKTV) serves as a coordination point for ATP. A Mg(2+)-binding site is contributed by Thr-17. Residue Lys-38 is part of the active site. ATP-binding positions include Asp-55, 116–119 (EGAG), and 176–177 (NR). The Mg(2+) site is built by Asp-55 and Glu-116.

Belongs to the dethiobiotin synthetase family. In terms of assembly, homodimer. The cofactor is Mg(2+).

The protein resides in the cytoplasm. The enzyme catalyses (7R,8S)-7,8-diammoniononanoate + CO2 + ATP = (4R,5S)-dethiobiotin + ADP + phosphate + 3 H(+). Its pathway is cofactor biosynthesis; biotin biosynthesis; biotin from 7,8-diaminononanoate: step 1/2. Functionally, catalyzes a mechanistically unusual reaction, the ATP-dependent insertion of CO2 between the N7 and N8 nitrogen atoms of 7,8-diaminopelargonic acid (DAPA, also called 7,8-diammoniononanoate) to form a ureido ring. The polypeptide is ATP-dependent dethiobiotin synthetase BioD (Vibrio cholerae serotype O1 (strain ATCC 39315 / El Tor Inaba N16961)).